The primary structure comprises 655 residues: T-lymphocyte surface antigen Ly-9 (655 aa).

An N-terminal signal peptide occupies residues 1-47 (MVAPKSHTDDWAPGPFSSKPQRSQLQIFSSVLQTSLLFLLMGLRASG). One can recognise an Ig-like V-type 1 domain in the interval 48–158 (KDSAPTVVSG…FVYEQLQEPQ (111 aa)). The Extracellular segment spans residues 48-454 (KDSAPTVVSG…ICSGPERNTK (407 aa)). N-linked (GlcNAc...) asparagine glycans are attached at residues Asn68, Asn95, Asn120, Asn169, and Asn173. The region spanning 159–235 (VTMKSVKVSE…NPVSQRSSLP (77 aa)) is the Ig-like C2-type 1 domain. 2 disulfides stabilise this stretch: Cys172/Cys242 and Cys178/Cys222. Positions 251–363 (GTTGETVVGV…LLIYRRLRKP (113 aa)) constitute an Ig-like V-type 2 domain. N-linked (GlcNAc...) asparagine glycans are attached at residues Asn285, Asn413, and Asn424. Residues 364-452 (KITWSLRHSE…ENICSGPERN (89 aa)) enclose the Ig-like C2-type 2 domain. 2 cysteine pairs are disulfide-bonded: Cys377-Cys446 and Cys383-Cys427. Residues 455 to 476 (LWIGLFLMVCLLCVGIFSWCIW) form a helical membrane-spanning segment. At 477–655 (KRKGRCSVPA…PESPTYENFT (179 aa)) the chain is on the cytoplasmic side. Residues 521–556 (PLRPARQQPTPTSDSSSDSNLTTEEDEDRPEVHKPI) are disordered. Low complexity predominate over residues 530–542 (TPTSDSSSDSNLT). Short sequence motifs (ITSM) lie at residues 601–606 (TMYAQV) and 624–629 (TIYCSI). A Phosphotyrosine modification is found at Tyr603. Residues 633–655 (QVVPPPQQNDLEIPESPTYENFT) form a disordered region.

In terms of assembly, interacts with SH2D1A, SH2D1B and INPP5D. Interacts (via phosphorylated cytoplasmic domain) with PTPN11; the interaction is blocked by SH2D1A. Increased surface expression on T-cells of systemic lupus erythematosus (SLE) patients.

It is found in the membrane. The protein localises to the cell membrane. Its function is as follows. Self-ligand receptor of the signaling lymphocytic activation molecule (SLAM) family. SLAM receptors triggered by homo- or heterotypic cell-cell interactions are modulating the activation and differentiation of a wide variety of immune cells and thus are involved in the regulation and interconnection of both innate and adaptive immune response. Activities are controlled by presence or absence of small cytoplasmic adapter proteins, SH2D1A/SAP and/or SH2D1B/EAT-2. May participate in adhesion reactions between T lymphocytes and accessory cells by homophilic interaction. Promotes T-cell differentiation into a helper T-cell Th17 phenotype leading to increased IL-17 secretion; the costimulatory activity requires SH2D1A. Promotes recruitment of RORC to the IL-17 promoter. May be involved in the maintenance of peripheral cell tolerance by serving as a negative regulator of the immune response. May disable autoantibody responses and inhibit IFN-gamma secretion by CD4(+) T-cells. May negatively regulate the size of thymic innate CD8(+) T-cells and the development of invariant natural killer T (iNKT) cells. This is T-lymphocyte surface antigen Ly-9 (LY9) from Homo sapiens (Human).